The primary structure comprises 433 residues: Pyroglutamylated RF-amide peptide receptor (433 aa).

The Extracellular portion of the chain corresponds to 1 to 46 (MQALNITAEQFSRLLSAHNLTREQFIHRYGLRPLVYTPELPARAKV). N-linked (GlcNAc...) asparagine glycans are attached at residues N5 and N19. A helical membrane pass occupies residues 47-67 (AFALAGALIFALALFGNSLVI). Residues 68-81 (YVVTRSKAMRTVTN) are Cytoplasmic-facing. Residues 82–102 (IFICSLALSDLLIAFFCIPVT) traverse the membrane as a helical segment. Residues 103 to 120 (MLQNISDKWLGGAFICKM) are Extracellular-facing. Residues 121–141 (VPFVQSTAVVTEILTMTCIAV) traverse the membrane as a helical segment. At 142–162 (ERHQGLVHPFKMKWQYTTRRA) the chain is on the cytoplasmic side. A helical membrane pass occupies residues 163 to 183 (FTILGVVWLAAIIVGSPMWHV). The Extracellular segment spans residues 184–212 (QRLEIKYDFLYEKEHICCLEEWASPVHQR). The chain crosses the membrane as a helical span at residues 213-233 (IYSTFILVILFLLPLVVMLVL). The Cytoplasmic segment spans residues 234-271 (YSKIGYELWIKKRVGDSSALQTIHGKEMSKIARKKKRA). A helical transmembrane segment spans residues 272 to 292 (VIMMVTVVALFAACWAPFHVV). Topologically, residues 293-313 (HMMVEYSNFEKEYDDVTIKMV) are extracellular. A helical membrane pass occupies residues 314–334 (FAVAQTIGFFNSICNPFVYAF). Over 335-433 (MNENFKKNFL…NSTFGSGHEL (99 aa)) the chain is Cytoplasmic. Residues 356–389 (SSPARKPGNSGISMMQKRAKLSRPQRPVEETKGD) form a disordered region.

The protein belongs to the G-protein coupled receptor 1 family. In terms of tissue distribution, highly expressed in the adrenal gland and at moderate levels in the eye and testis. Expressed widely in the brain with high levels in the hypothalamus and moderate levels in the amygdala, basal forebrain, cortex, medulla oblongata, midbrain and thalamus.

It localises to the cell membrane. Its function is as follows. Receptor for the orexigenic neuropeptide QRFP. The activity of this receptor is mediated by G proteins that modulate adenylate cyclase activity and intracellular calcium levels. The sequence is that of Pyroglutamylated RF-amide peptide receptor (Qrfpr) from Rattus norvegicus (Rat).